A 93-amino-acid polypeptide reads, in one-letter code: Bublin coiled-coil protein (93 aa).

Disordered regions lie at residues 1-26 (MAGPNGDPHVLGGGTGDEGDEGGDTF) and 74-93 (QQQSKQLNTGADVQGSQPPA). Positions 17–26 (DEGDEGGDTF) are enriched in acidic residues. Residues 59-80 (LKELLESNRQTRLEFQQQSKQL) are a coiled coil.

The protein belongs to the UPF0184 (EST00098) family.

Its subcellular location is the cell junction. It localises to the cytoplasm. The protein localises to the cytoskeleton. Functionally, essential for intermediate filament organization in intestinal cells, interacts with intermediate filament and regulates intestinal lumen morphology. The sequence is that of Bublin coiled-coil protein (BBLN) from Taeniopygia guttata (Zebra finch).